The primary structure comprises 816 residues: Leucine--tRNA ligase (816 aa).

Residues 40 to 51 (SYPSGSQLHAGH) carry the 'HIGH' region motif. The 'KMSKS' region motif lies at 576–580 (KMSKS). Lys579 is a binding site for ATP.

It belongs to the class-I aminoacyl-tRNA synthetase family.

It localises to the cytoplasm. The catalysed reaction is tRNA(Leu) + L-leucine + ATP = L-leucyl-tRNA(Leu) + AMP + diphosphate. In Clostridium perfringens (strain SM101 / Type A), this protein is Leucine--tRNA ligase.